We begin with the raw amino-acid sequence, 204 residues long: Calexcitin-1 (204 aa).

3 EF-hand domains span residues 25–61 (FLVK…VRDI), 75–110 (SLAA…TDAK), and 115–150 (WFKD…YGFD). Positions 39, 41, 43, 45, 50, 88, 90, 92, 99, 128, 130, 132, and 139 each coordinate Ca(2+).

The sequence is that of Calexcitin-1 (cex-1) from Caenorhabditis elegans.